The chain runs to 489 residues: MAKDVRVGYAPSPTGHLHIGGARTALFNYLFARHHGGKMIVRIEDTDIERNVEGGEQSQLENLQWLGIDYDESVDKDGGYGPYRQTERLDIYRKYVDELLEQGHAYKCFCTPEELEREREEQRAAGIAAPQYSGKCRRLTPEQVAELEAQGKPYTIRLKVPEGKTYEVDDLVRGKVTFESKDIGDWVIVKANGIPTYNFAVVIDDHLMEISHVFRGEEHLSNTPKQLMVYEYFGWEPPQFAHLTLIVNEQRKKLSKRDESIIQFVSQYKELGYLPEAMFNFFALLGWSPEGEEEIFSKDELIRIFDVSRLSKSPSMFDTKKLTWMNNQYIKKLDLDRLVELALPHLVKAGRLPADMSDEQRQWARDLIALYQEQMSYGAEIVPLSELFFKEEVEYEDEARQVLAEEQVPDVLSAFLAHVRDLDPFTADEIKAAIKAVQKATGQKGKKLFMPIRAAVTGQTHGPELPFAIQLLGKQKVIERLERALQEKF.

Positions 11–21 (PSPTGHLHIGG) match the 'HIGH' region motif. The 'KMSKS' region motif lies at 253-257 (KLSKR). Lysine 256 contributes to the ATP binding site.

This sequence belongs to the class-I aminoacyl-tRNA synthetase family. Glutamate--tRNA ligase type 1 subfamily. As to quaternary structure, monomer.

Its subcellular location is the cytoplasm. It catalyses the reaction tRNA(Glu) + L-glutamate + ATP = L-glutamyl-tRNA(Glu) + AMP + diphosphate. Catalyzes the attachment of glutamate to tRNA(Glu) in a two-step reaction: glutamate is first activated by ATP to form Glu-AMP and then transferred to the acceptor end of tRNA(Glu). In Geobacillus stearothermophilus (Bacillus stearothermophilus), this protein is Glutamate--tRNA ligase.